Here is a 377-residue protein sequence, read N- to C-terminus: Circumsporozoite protein (377 aa).

Residues 1-22 (MKNFILLAVSSILLVDLFPTHC) form the signal peptide. A disordered region spans residues 51–294 (HVGQSASRGR…NNEGANAPNE (244 aa)). Positions 72–100 (DAKKKKDGKKAEPKNPRENKLKQPGDRAD) are enriched in basic and acidic residues. Residues 80-88 (KKAEPKNPR) form a required for the binding to heparan sulfate proteoglycans (HSPGs) on the surface of host hepatocytes region. The interval 91–95 (KLKQP) is region I; contains the proteolytic cleavage site. 20 repeat units span residues 95–103 (PGDRADGQP), 104–112 (AGDRADGQP), 113–121 (AGDRADGQP), 122–130 (AGDRADGQP), 131–139 (AGDRAAGQP), 140–148 (AGDRADGQP), 149–157 (AGDRADGQP), 158–166 (AGDRADGQP), 167–175 (AGDRADGQP), 176–184 (AGDRAAGQP), 185–193 (AGDRAAGQP), 194–202 (AGDRADGQP), 203–211 (AGDRAAGQP), 212–220 (AGDRADGQP), 221–229 (AGDRAAGQP), 230–238 (AGDRADGQP), 239–247 (AGDRAAGQP), 248–256 (AGDRAAGQP), 257–265 (AGDRAAGQA), and 266–274 (AGDRAAGQA). The interval 95–274 (PGDRADGQPA…AAGDRAAGQA (180 aa)) is 20 X 9 AA tandem repeats of [PA]-G-D-R-A-[DA]-G-Q-[PA]. Residues 236 to 273 (GQPAGDRAAGQPAGDRAAGQPAGDRAAGQAAGDRAAGQ) show a composition bias toward low complexity. A compositionally biased stretch (gly residues) spans 274-283 (AAGGNAGGQG). Low complexity predominate over residues 284-293 (QNNEGANAPN). One can recognise a TSP type-1 domain in the interval 303-355 (KVRATVGTEWTPCSVTCGVGVRVRRRVNAANKKPEDLTLNDLETDVCTMDKCA). 2 disulfide bridges follow: cysteine 315-cysteine 349 and cysteine 319-cysteine 354. Threonine 318 carries an O-linked (Fuc) threonine glycan. Cysteine 354 is lipidated: GPI-anchor amidated cysteine. Positions 355-377 (AGIFNVVSNSLGLVILLVLALFN) are cleaved as a propeptide — removed in mature form.

It belongs to the plasmodium circumsporozoite protein family. Post-translationally, during host cell invasion, proteolytically cleaved at the cell membrane in the region I by a papain-like cysteine protease of parasite origin. Cleavage is triggered by the sporozoite contact with highly sulfated heparan sulfate proteoglycans (HSPGs) present on the host hepatocyte cell surface. Cleavage exposes the TSP type-1 (TSR) domain and is required for productive invasion of host hepatocytes but not for adhesion to the host cell membrane. Cleavage is dispensable for sporozoite development in the oocyst, motility and for traversal of host and vector cells. O-glycosylated; maybe by POFUT2.

Its subcellular location is the cell membrane. The protein resides in the cytoplasm. In terms of biological role, essential sporozoite protein. In the mosquito vector, required for sporozoite development in the oocyst, migration through the vector hemolymph and entry into the vector salivary glands. In the vertebrate host, required for sporozoite migration through the host dermis and infection of host hepatocytes. Binds to highly sulfated heparan sulfate proteoglycans (HSPGs) on the surface of host hepatocytes. Its function is as follows. In the vertebrate host, binds to highly sulfated heparan sulfate proteoglycans (HSPGs) on the surface of host hepatocytes and is required for sporozoite invasion of the host hepatocytes. This is Circumsporozoite protein from Plasmodium vivax (strain Salvador I).